Reading from the N-terminus, the 109-residue chain is uncharacterized protein (109 aa).

In terms of domain architecture, HTH cro/C1-type spans 42–100 (LEEKLKQEKIDRKYLAEVTNIPYTTVSRIMRAEANREFNPEIDTILKIAKYFNCTMDEV). Positions 53 to 72 (RKYLAEVTNIPYTTVSRIMR) form a DNA-binding region, H-T-H motif.

This is an uncharacterized protein from Rickettsia conorii (strain ATCC VR-613 / Malish 7).